The chain runs to 156 residues: Ribosomal RNA large subunit methyltransferase H (156 aa).

Residues L73, G104, and 123-128 (LSPLTL) contribute to the S-adenosyl-L-methionine site.

The protein belongs to the RNA methyltransferase RlmH family. In terms of assembly, homodimer.

It localises to the cytoplasm. It carries out the reaction pseudouridine(1915) in 23S rRNA + S-adenosyl-L-methionine = N(3)-methylpseudouridine(1915) in 23S rRNA + S-adenosyl-L-homocysteine + H(+). Functionally, specifically methylates the pseudouridine at position 1915 (m3Psi1915) in 23S rRNA. The polypeptide is Ribosomal RNA large subunit methyltransferase H (Yersinia pseudotuberculosis serotype O:1b (strain IP 31758)).